Reading from the N-terminus, the 326-residue chain is MASISSLNQIPCKTLQITSQYSKPTSKISTLPISSTNFPSKTELHRSISVKEFTNPKPKFTAQATNYDKEDEWGPEVEQIRPGGVAVVEEEPPKEPSEIELLKKQLADSLYGTNRGLSASSETRAEIVELITQLESKNPNPAPTEALTLLNGKWILAYTSFSGLFPLLSRGNLPLVRVEEISQTIDSESFTVQNSVVFAGPLATTSISTNAKFEVRSPKRVQIKFEEGIIGTPQLTDSIVLPENVEFLGQKIDLSPFKGLITSVQDTASSVAKSISSQPPIKFPITNNNAQSWLLTTYLDDELRISRGDAGSVFVLIKEGSPLLKP.

A chloroplast-targeting transit peptide spans 1-63 (MASISSLNQI…TNPKPKFTAQ (63 aa)).

The protein belongs to the LIPC family. Associates with the major light-harvesting antenna complex polypeptides of the PSII oxygen-evolving complex. As to expression, expressed in leaves.

It localises to the plastid. It is found in the chloroplast thylakoid membrane. Functionally, required for normal plant growth. May be both photoprotective and play an ancillary role in photosynthesis. May structurally stabilize thylakoids during osmotic and oxidative stress. This Solanum tuberosum (Potato) protein is Light-induced protein, chloroplastic.